The primary structure comprises 141 residues: Mu-like prophage FluMu protein gp36 (141 aa).

This sequence to phage Mu protein gp36.

The chain is Mu-like prophage FluMu protein gp36 from Haemophilus influenzae (strain ATCC 51907 / DSM 11121 / KW20 / Rd).